The sequence spans 957 residues: SH3 domain-binding protein 4-A (957 aa).

One can recognise an SH3 1 domain in the interval 54–113 (ENVKEVVAIKDYCPNNFTTLKFSKGEHLYVLDASGGDWWYAHNSTEMGYIPSSYVQPLNY). One can recognise a ZU5 domain in the interval 312–449 (TSIVCRLDSS…LEPVMYVVMV (138 aa)). The SH3 2 domain occupies 649 to 719 (TSLKYGKLLK…HAKNVLVVGK (71 aa)).

In terms of assembly, homodimer or homooligomer.

It is found in the membrane. The protein resides in the clathrin-coated pit. It localises to the cytoplasmic vesicle. The protein localises to the clathrin-coated vesicle. Its subcellular location is the nucleus. Its function is as follows. Possible role in regulating endocytosis of the transferrin receptor at the plasma membrane. Alternatively, may function as a negative regulator of the amino acid-induced TOR signaling by inhibiting the formation of active Rag GTPase complexes. Preferentially binds inactive Rag GTPase complexes and prevents their interaction with the mTORC1 complex inhibiting its relocalization to lysosomes and its activation. Thereby, may indirectly regulate cell growth, proliferation and autophagy. This is SH3 domain-binding protein 4-A (sh3bp4-a) from Xenopus laevis (African clawed frog).